The chain runs to 486 residues: Iron-sulfur cluster assembly SufBD family protein ycf24 (486 aa).

The protein belongs to the iron-sulfur cluster assembly SufBD family.

The protein resides in the plastid. It localises to the chloroplast. The polypeptide is Iron-sulfur cluster assembly SufBD family protein ycf24 (ycf24) (Trieres chinensis (Marine centric diatom)).